A 330-amino-acid polypeptide reads, in one-letter code: NADH-quinone oxidoreductase subunit H (330 aa).

The next 9 helical transmembrane spans lie at 5–25 (LFFIIETFIKAVVILAVIACL), 44–64 (IGPDMVGPVGVLQIVADMIKL), 78–98 (FIFLIAPLISAIAAFAALAPI), 122–142 (VLYVMGVASVCVFSPLMAGLA), 156–176 (VMGLISFEVVSGLALLSVIMI), 192–212 (IFGWFVFKQPLAFVLFLMASF), 240–260 (MRWAMFFIGEYANMIASSIVI), 271–293 (FWFVPGGLMMIFKASCVFFFFLW), and 310–330 (CWKILLPLALVNVLITGIALI).

Belongs to the complex I subunit 1 family. As to quaternary structure, NDH-1 is composed of 14 different subunits. Subunits NuoA, H, J, K, L, M, N constitute the membrane sector of the complex.

It localises to the cell inner membrane. The enzyme catalyses a quinone + NADH + 5 H(+)(in) = a quinol + NAD(+) + 4 H(+)(out). Functionally, NDH-1 shuttles electrons from NADH, via FMN and iron-sulfur (Fe-S) centers, to quinones in the respiratory chain. The immediate electron acceptor for the enzyme in this species is believed to be ubiquinone. Couples the redox reaction to proton translocation (for every two electrons transferred, four hydrogen ions are translocated across the cytoplasmic membrane), and thus conserves the redox energy in a proton gradient. This subunit may bind ubiquinone. The chain is NADH-quinone oxidoreductase subunit H from Campylobacter curvus (strain 525.92).